The sequence spans 494 residues: Flavin-containing monooxygenase ustF2 (494 aa).

Positions 1-21 are cleaved as a signal peptide; it reads MANPQTTRVAVVGAGISGVLA. 13-18 contacts FAD; that stretch reads GAGISG. The disordered stretch occupies residues 73-93; that stretch reads EPSYPAMKPSKADPPATNEQE. 250 to 255 serves as a coordination point for NADP(+); that stretch reads GGGVSS. N-linked (GlcNAc...) asparagine glycosylation is present at Asn459.

It belongs to the FMO family.

It functions in the pathway mycotoxin biosynthesis. Functionally, flavin-containing monooxygenase; part of the gene cluster that mediates the biosynthesis of the secondary metabolite ustiloxin B, an antimitotic tetrapeptide. First, ustA is processed by the subtilisin-like endoprotease Kex2 that is outside the ustiloxin B gene cluster, at the C-terminal side of Arg-Lys, after transfer to Golgi apparatus through the endoplasmic reticulum (ER). Cleavage by KEX2 generates 16 peptides YAIG-I to YAIG-XVI. To process the precursor peptide further, at least two peptidases are necessary to cleave the N-terminal and C-terminal sides of the Tyr-Ala-Ile-Gly core peptide which serves as backbone for the synthesis of ustiloxin B, through cyclization and modification of the tyrosine with a non-protein coding amino acid, norvaline. One of the two peptidases must be the serine peptidase ustP; and the other pepdidase is probably ustH. Macrocyclization of the core peptide derived from ustA requires the tyrosinase ustQ, as well as the homologous oxidases ustYa and ustYb, and leads to the production of the first cyclization product N-desmethylustiloxin F. For the formation of N-desmethylustiloxin F, three oxidation steps are required, hydroxylation at the benzylic position, hydroxylation at either the aromatic ring of Tyr or beta-position of Ile, and oxidative cyclization. UstQ may catalyze the oxidation of a phenol moiety, whereas the ustYa and ustYb are most likely responsible for the remaining two-step oxidations. N-desmethylustiloxin F is then methylated by ustM to yield ustiloxin F which in turn substrate of the cytochrome P450 monooxygenase ustC which catalyzes the formation of S-deoxyustiloxin H. The flavoprotein monooxygenases ustF1 and ustF2 then participate in the modification of the side chain of S-deoxyustiloxin H, leading to the synthesis of an oxime intermediate, via ustiloxin H. Finally, carboxylative dehydration performed by the cysteine desulfurase-like protein ustD yields ustiloxin B. This Aspergillus flavus (strain ATCC 200026 / FGSC A1120 / IAM 13836 / NRRL 3357 / JCM 12722 / SRRC 167) protein is Flavin-containing monooxygenase ustF2.